The primary structure comprises 573 residues: 60 kDa lysophospholipase (573 aa).

The 347-residue stretch at 9–355 folds into the Asparaginase/glutaminase domain; it reads RRLLAVYTGG…DVRKELLTKD (347 aa). T19 serves as the catalytic Acyl-ester intermediate. The segment at 41-350 is asparaginase; sequence TLPMFHDEEH…PGLSLDVRKE (310 aa). Substrate-binding positions include 84–86 and 116–117; these read DSS and TD. ANK repeat units lie at residues 141-170, 399-429, 433-462, 466-495, and 533-562; these read GAQV…YVIP, ALVP…DLGL, NGQT…DVNT, DGFS…SLST, and DGHS…AVGA.

This sequence in the N-terminal section; belongs to the asparaginase 1 family. In terms of assembly, monomer.

It carries out the reaction a 1-acyl-sn-glycero-3-phosphocholine + H2O = sn-glycerol 3-phosphocholine + a fatty acid + H(+). The catalysed reaction is L-asparagine + H2O = L-aspartate + NH4(+). It catalyses the reaction a 1-O-alkyl-2-acetyl-sn-glycero-3-phosphocholine + H2O = a 1-O-alkyl-sn-glycero-3-phosphocholine + acetate + H(+). The enzyme catalyses 1-hexadecanoyl-sn-glycero-3-phosphocholine + H2O = sn-glycerol 3-phosphocholine + hexadecanoate + H(+). It carries out the reaction 2 1-hexadecanoyl-sn-glycero-3-phosphocholine = 1,2-dihexadecanoyl-sn-glycero-3-phosphocholine + sn-glycerol 3-phosphocholine. The catalysed reaction is 1-octadecanoyl-sn-glycero-3-phosphocholine + H2O = octadecanoate + sn-glycerol 3-phosphocholine + H(+). It catalyses the reaction 1-(9Z-octadecenoyl)-sn-glycero-3-phosphocholine + H2O = sn-glycerol 3-phosphocholine + (9Z)-octadecenoate + H(+). The enzyme catalyses 1-hexadecanoyl-sn-glycero-3-phosphoethanolamine + H2O = sn-glycero-3-phosphoethanolamine + hexadecanoate + H(+). It carries out the reaction 1-(9Z-octadecenoyl)-sn-glycero-3-phosphoethanolamine + H2O = sn-glycero-3-phosphoethanolamine + (9Z)-octadecenoate + H(+). The catalysed reaction is 1-hexadecanoyl-sn-glycero-3-phosphoethanolamine + 1-hexadecanoyl-sn-glycero-3-phosphocholine = 1,2-dihexadecanoyl-sn-glycero-3-phosphoethanolamine + sn-glycerol 3-phosphocholine. It catalyses the reaction 2-(5Z,8Z,11Z,14Z)-eicosatetraenoyl-sn-glycero-3-phosphocholine + H2O = sn-glycerol 3-phosphocholine + (5Z,8Z,11Z,14Z)-eicosatetraenoate + H(+). The enzyme catalyses 2-hexadecanoyl-sn-glycero-3-phosphocholine + H2O = sn-glycerol 3-phosphocholine + hexadecanoate + H(+). It carries out the reaction 2 2-hexadecanoyl-sn-glycero-3-phosphocholine = 1,2-dihexadecanoyl-sn-glycero-3-phosphocholine + sn-glycerol 3-phosphocholine. The catalysed reaction is 1-O-(9Z)-octadecenoyl-2-O-acetyl-sn-glycero-3-phosphocholine + H2O = 2-acetyl-sn-glycero-3-phosphocholine + (9Z)-octadecenoate + H(+). It catalyses the reaction a 1-acyl-sn-glycero-3-phospho-(1D-myo-inositol) + 1-hexadecanoyl-sn-glycero-3-phosphocholine = a 1-acyl-2-hexadecanoyl-sn-glycero-3-phospho-(1D-myo-inositol) + sn-glycerol 3-phosphocholine. The enzyme catalyses 2 2-(5Z,8Z,11Z,14Z)-eicosatetraenoyl-sn-glycero-3-phosphocholine = 1,2-di-(5Z,8Z,11Z,14Z-eicosatetraenoyl)-sn-glycero-3-phosphocholine + sn-glycerol 3-phosphocholine. Functionally, exhibits lysophospholipase, transacylase, PAF acetylhydrolase and asparaginase activities. Can catalyze three types of transacylation reactions: (1) acyl transfer from 1-acyl-sn-glycero-3-phosphocholine (1-acyl-GPC) to the sn-1(3) positions of glycerol and 2-acylglycerol (sn-1 to -1(3) transfer), (2) acyl transfer from 1-acyl-GPC to the sn-2 positions of 1-acyl-GPC, 1-acyl-sn-glycero-3-phosphoethanolamine (1-acyl-GPE), and other lysophospholipids (sn-1 to -2 transfer) and (3) acyl transfer from 2-acyl-GPC to the sn-1 position of 2-acyl-GPC and 2-acyl-GPE (sn-2 to -1 transfer). Mediates the synthesis of 1-arachidonoyl species of phospholipids by transferring the arachidonoyl residue from 2-arachidonoyl lysophospholipid to the sn-1 position of 2-acyl lysophospholipid. This Homo sapiens (Human) protein is 60 kDa lysophospholipase (ASPG).